Consider the following 90-residue polypeptide: Conotoxin TxMMSK-06 (90 aa).

The first 22 residues, 1–22, serve as a signal peptide directing secretion; sequence MMSKLGVLLTICLLLFPHTAVP. Residues 23–74 constitute a propeptide that is removed on maturation; sequence LDGDQHADQPAERLQDDISSEHHPMLNSIRRREQNQFMSFTSVKLRDSRGER. The disordered stretch occupies residues 24-43; it reads DGDQHADQPAERLQDDISSE. Positions 25 to 43 are enriched in basic and acidic residues; it reads GDQHADQPAERLQDDISSE. 3 disulfides stabilise this stretch: Cys75-Cys89, Cys76-Cys85, and Cys81-Cys88. Pro87 bears the 4-hydroxyproline mark. Position 89 is a cysteine amide (Cys89).

The protein belongs to the conotoxin M superfamily. As to expression, expressed by the venom duct.

It localises to the secreted. This Conus textile (Cloth-of-gold cone) protein is Conotoxin TxMMSK-06.